A 420-amino-acid chain; its full sequence is Serine/threonine-protein phosphatase 4 regulatory subunit 2-A (420 aa).

Residues 157–420 are disordered; it reads GNTSAFPDRN…ETADDNMEQD (264 aa). Residues 182 to 195 are compositionally biased toward polar residues; that stretch reads SLSSNVATNGLPDS. Residues 196-210 are compositionally biased toward basic and acidic residues; that stretch reads TESKEQASEQSERTV. Residues 212-224 show a composition bias toward low complexity; that stretch reads ESSASEAESHSGA. Positions 229 to 250 are enriched in basic and acidic residues; it reads HRDDEDATHAETHEAKRLKFDK. Acidic residues predominate over residues 251–266; that stretch reads EEEEEEDDEEEDEDGD. Over residues 267-276 the composition is skewed to basic and acidic residues; sequence EIKKELDEPH. Residues 278 to 296 are compositionally biased toward polar residues; sequence PCTSVAESSSDVPQSSTDV. Over residues 318–332 the composition is skewed to basic and acidic residues; sequence GVDRSTSEDSPDPSH. A compositionally biased stretch (acidic residues) spans 346–364; the sequence is AEEEEEEESAEAQETEETN. Low complexity predominate over residues 368–394; the sequence is SSSSNNSSDEGVSSAETPSASPSSSTE. Residues 411–420 show a composition bias toward acidic residues; sequence ETADDNMEQD.

It belongs to the PPP4R2 family. In terms of assembly, serine/threonine-protein phosphatase 4 (PP4) occurs in different assemblies of the catalytic and one or more regulatory subunits.

Regulatory subunit of serine/threonine-protein phosphatase 4 (PP4C). The polypeptide is Serine/threonine-protein phosphatase 4 regulatory subunit 2-A (ppp4r2a) (Danio rerio (Zebrafish)).